A 507-amino-acid polypeptide reads, in one-letter code: Ribonuclease Y (507 aa).

A helical transmembrane segment spans residues 1-21 (MLWYIVAGAGGLLIGYLIANY). Residues 197-282 (TVSTVSLPSD…EMYEKAKQEV (86 aa)) enclose the KH domain. Positions 323 to 416 (VLNHSIEVAL…VAAADALSAA (94 aa)) constitute an HD domain.

Belongs to the RNase Y family.

Its subcellular location is the cell membrane. In terms of biological role, endoribonuclease that initiates mRNA decay. This chain is Ribonuclease Y, found in Thermotoga sp. (strain RQ2).